The following is a 418-amino-acid chain: Arrestin domain-containing protein 4 (418 aa).

2 consecutive short sequence motifs (PPxY motif) follow at residues 350 to 353 (PPNY) and 395 to 398 (PPLY).

Belongs to the arrestin family. Interacts with ADRB2. Interacts (via PPxY motifs) with ITCH, NEDD4L and WWP2. Interacts with AVPR2. Identified in a complex containing at least ARRDC4, AVPR2 and HGS. Interacts with SLC11A2; controls the incorporation of SLC11A2 into extracellular vesicles through an ubiquitination-dependent mechanism. Interacts with TRIM65.

Its subcellular location is the early endosome. The protein localises to the cell membrane. It localises to the cytoplasmic vesicle. Functions as an adapter recruiting ubiquitin-protein ligases to their specific substrates. Plays a role in endocytosis of activated G protein-coupled receptors (GPCRs). Through an ubiquitination-dependent mechanism also plays a role in the incorporation of SLC11A2 into extracellular vesicles. May play a role in glucose uptake. Participates in innate immune response by promoting IFIH1/MDA5 activation through interaction with TRIM65. The chain is Arrestin domain-containing protein 4 (ARRDC4) from Homo sapiens (Human).